Consider the following 700-residue polypeptide: Elongation factor G (700 aa).

A tr-type G domain is found at 8 to 290; sequence ERYRNIGISA…AVVEFMPSPV (283 aa). GTP is bound by residues 17-24, 88-92, and 142-145; these read AHIDAGKT, DTPGH, and NKMD.

It belongs to the TRAFAC class translation factor GTPase superfamily. Classic translation factor GTPase family. EF-G/EF-2 subfamily.

The protein resides in the cytoplasm. Catalyzes the GTP-dependent ribosomal translocation step during translation elongation. During this step, the ribosome changes from the pre-translocational (PRE) to the post-translocational (POST) state as the newly formed A-site-bound peptidyl-tRNA and P-site-bound deacylated tRNA move to the P and E sites, respectively. Catalyzes the coordinated movement of the two tRNA molecules, the mRNA and conformational changes in the ribosome. The sequence is that of Elongation factor G from Albidiferax ferrireducens (strain ATCC BAA-621 / DSM 15236 / T118) (Rhodoferax ferrireducens).